A 130-amino-acid polypeptide reads, in one-letter code: Small ribosomal subunit protein uS9 (130 aa).

The protein belongs to the universal ribosomal protein uS9 family.

The protein is Small ribosomal subunit protein uS9 of Streptococcus thermophilus (strain CNRZ 1066).